The sequence spans 1339 residues: DNA polymerase alpha catalytic subunit (1339 aa).

Disordered stretches follow at residues 1–90 (MSGG…SMSD) and 177–203 (NVER…GYRN). Residues 27–36 (DQWRSLREEV) show a composition bias toward basic and acidic residues. Polar residues predominate over residues 79-89 (PKQQTLAQSMS). Residues Cys1179, Cys1182, Cys1213, Cys1216, Cys1233, Cys1243, Cys1271, and Cys1286 each contribute to the Zn(2+) site. The CysA-type zinc-finger motif lies at 1179–1216 (CTHCRLMTPINPHTRVMEVLADQERQRDRFDLYVCVSC). Residues 1243-1271 (CGSAAAVKAVRTQFTYYRALFDVPHAPGC) carry the CysB motif motif.

Belongs to the DNA polymerase type-B family.

It is found in the nucleus. It carries out the reaction DNA(n) + a 2'-deoxyribonucleoside 5'-triphosphate = DNA(n+1) + diphosphate. In terms of biological role, polymerase alpha in a complex with DNA primase is a replicative polymerase. The chain is DNA polymerase alpha catalytic subunit from Leishmania donovani.